The chain runs to 418 residues: Serine hydroxymethyltransferase (418 aa).

(6S)-5,6,7,8-tetrahydrofolate contacts are provided by residues Leu121 and 125–127 (GHL). Lys230 carries the post-translational modification N6-(pyridoxal phosphate)lysine. Position 355 to 357 (355 to 357 (SPF)) interacts with (6S)-5,6,7,8-tetrahydrofolate.

The protein belongs to the SHMT family. In terms of assembly, homodimer. Requires pyridoxal 5'-phosphate as cofactor.

It localises to the cytoplasm. It carries out the reaction (6R)-5,10-methylene-5,6,7,8-tetrahydrofolate + glycine + H2O = (6S)-5,6,7,8-tetrahydrofolate + L-serine. The protein operates within one-carbon metabolism; tetrahydrofolate interconversion. It functions in the pathway amino-acid biosynthesis; glycine biosynthesis; glycine from L-serine: step 1/1. Catalyzes the reversible interconversion of serine and glycine with tetrahydrofolate (THF) serving as the one-carbon carrier. This reaction serves as the major source of one-carbon groups required for the biosynthesis of purines, thymidylate, methionine, and other important biomolecules. Also exhibits THF-independent aldolase activity toward beta-hydroxyamino acids, producing glycine and aldehydes, via a retro-aldol mechanism. This chain is Serine hydroxymethyltransferase, found in Streptococcus pyogenes serotype M3 (strain ATCC BAA-595 / MGAS315).